The chain runs to 872 residues: Alanine--tRNA ligase (872 aa).

Zn(2+) contacts are provided by H567, H571, C669, and H673.

Belongs to the class-II aminoacyl-tRNA synthetase family. The cofactor is Zn(2+).

The protein localises to the cytoplasm. The catalysed reaction is tRNA(Ala) + L-alanine + ATP = L-alanyl-tRNA(Ala) + AMP + diphosphate. Functionally, catalyzes the attachment of alanine to tRNA(Ala) in a two-step reaction: alanine is first activated by ATP to form Ala-AMP and then transferred to the acceptor end of tRNA(Ala). Also edits incorrectly charged Ser-tRNA(Ala) and Gly-tRNA(Ala) via its editing domain. The chain is Alanine--tRNA ligase from Streptococcus thermophilus (strain ATCC BAA-491 / LMD-9).